The following is a 180-amino-acid chain: Large ribosomal subunit protein uL5 (180 aa).

The protein belongs to the universal ribosomal protein uL5 family. In terms of assembly, part of the 50S ribosomal subunit; part of the 5S rRNA/L5/L18/L25 subcomplex. Contacts the 5S rRNA and the P site tRNA. Forms a bridge to the 30S subunit in the 70S ribosome.

Functionally, this is one of the proteins that bind and probably mediate the attachment of the 5S RNA into the large ribosomal subunit, where it forms part of the central protuberance. In the 70S ribosome it contacts protein S13 of the 30S subunit (bridge B1b), connecting the 2 subunits; this bridge is implicated in subunit movement. Contacts the P site tRNA; the 5S rRNA and some of its associated proteins might help stabilize positioning of ribosome-bound tRNAs. In Streptococcus pneumoniae (strain JJA), this protein is Large ribosomal subunit protein uL5.